A 122-amino-acid polypeptide reads, in one-letter code: Large ribosomal subunit protein uL14c (122 aa).

It belongs to the universal ribosomal protein uL14 family. As to quaternary structure, part of the 50S ribosomal subunit.

The protein resides in the plastid. The protein localises to the chloroplast. In terms of biological role, binds to 23S rRNA. This Populus alba (White poplar) protein is Large ribosomal subunit protein uL14c.